The sequence spans 202 residues: Probable GTP-binding protein EngB (202 aa).

The region spanning 30–201 (NILQIALAGR…WERIQYTIDS (172 aa)) is the EngB-type G domain. GTP contacts are provided by residues 38–45 (GRSNVGKS), 65–69 (GKTRS), 84–87 (DLPG), 151–154 (TKID), and 180–182 (VSS). 2 residues coordinate Mg(2+): Ser45 and Thr67.

The protein belongs to the TRAFAC class TrmE-Era-EngA-EngB-Septin-like GTPase superfamily. EngB GTPase family. Mg(2+) serves as cofactor.

Necessary for normal cell division and for the maintenance of normal septation. This Lawsonia intracellularis (strain PHE/MN1-00) protein is Probable GTP-binding protein EngB.